We begin with the raw amino-acid sequence, 336 residues long: 4-hydroxy-3-methylbut-2-enyl diphosphate reductase (336 aa).

Cys-37 provides a ligand contact to [4Fe-4S] cluster. 2 residues coordinate (2E)-4-hydroxy-3-methylbut-2-enyl diphosphate: His-66 and His-99. Dimethylallyl diphosphate contacts are provided by His-66 and His-99. 2 residues coordinate isopentenyl diphosphate: His-66 and His-99. Cys-121 contributes to the [4Fe-4S] cluster binding site. His-149 contacts (2E)-4-hydroxy-3-methylbut-2-enyl diphosphate. Position 149 (His-149) interacts with dimethylallyl diphosphate. His-149 lines the isopentenyl diphosphate pocket. Glu-151 serves as the catalytic Proton donor. Thr-189 contacts (2E)-4-hydroxy-3-methylbut-2-enyl diphosphate. A [4Fe-4S] cluster-binding site is contributed by Cys-219. Residues Ser-247, Ser-248, Asn-249, and Ser-292 each contribute to the (2E)-4-hydroxy-3-methylbut-2-enyl diphosphate site. Dimethylallyl diphosphate-binding residues include Ser-247, Ser-248, Asn-249, and Ser-292. Ser-247, Ser-248, Asn-249, and Ser-292 together coordinate isopentenyl diphosphate.

Belongs to the IspH family. Requires [4Fe-4S] cluster as cofactor.

The catalysed reaction is isopentenyl diphosphate + 2 oxidized [2Fe-2S]-[ferredoxin] + H2O = (2E)-4-hydroxy-3-methylbut-2-enyl diphosphate + 2 reduced [2Fe-2S]-[ferredoxin] + 2 H(+). The enzyme catalyses dimethylallyl diphosphate + 2 oxidized [2Fe-2S]-[ferredoxin] + H2O = (2E)-4-hydroxy-3-methylbut-2-enyl diphosphate + 2 reduced [2Fe-2S]-[ferredoxin] + 2 H(+). It participates in isoprenoid biosynthesis; dimethylallyl diphosphate biosynthesis; dimethylallyl diphosphate from (2E)-4-hydroxy-3-methylbutenyl diphosphate: step 1/1. The protein operates within isoprenoid biosynthesis; isopentenyl diphosphate biosynthesis via DXP pathway; isopentenyl diphosphate from 1-deoxy-D-xylulose 5-phosphate: step 6/6. Its function is as follows. Catalyzes the conversion of 1-hydroxy-2-methyl-2-(E)-butenyl 4-diphosphate (HMBPP) into a mixture of isopentenyl diphosphate (IPP) and dimethylallyl diphosphate (DMAPP). Acts in the terminal step of the DOXP/MEP pathway for isoprenoid precursor biosynthesis. In Nocardia farcinica (strain IFM 10152), this protein is 4-hydroxy-3-methylbut-2-enyl diphosphate reductase.